A 139-amino-acid chain; its full sequence is Coat protein TP2 (139 aa).

The protein localises to the virion. The sequence is that of Coat protein TP2 from Thermoproteus tenax virus 1 (strain KRA1) (TTV1).